The primary structure comprises 266 residues: Nus factor SuhB (266 aa).

86–89 is a binding site for substrate; the sequence is LDGI.

The protein belongs to the inositol monophosphatase superfamily. In terms of assembly, homodimer. The rRNA transcription and antitermination complex (rrnTAC) consists of RNA polymerase (RNAP), NusA, NusB, NusE (rpsJ), NusG, SubB, ribosomal protein S4, DNA and precursor rRNA; S4 is more flexible than other subunits. Mg(2+) serves as cofactor.

The protein localises to the cytoplasm. It catalyses the reaction a myo-inositol phosphate + H2O = myo-inositol + phosphate. Part of the processive rRNA transcription and antitermination complex (rrnTAC). The complex forms an RNA-chaperone ring around the RNA exit tunnel of RNA polymerase (RNAP). It supports rapid transcription and antitermination of rRNA operons, cotranscriptional rRNA folding, and annealing of distal rRNA regions to allow correct ribosome biogenesis. This subunit may play a central role in organizing the structure. This is Nus factor SuhB (suhB) from Buchnera aphidicola subsp. Baizongia pistaciae (strain Bp).